The chain runs to 91 residues: Probable Fe(2+)-trafficking protein (91 aa).

The protein belongs to the Fe(2+)-trafficking protein family. As to quaternary structure, monomer.

Could be a mediator in iron transactions between iron acquisition and iron-requiring processes, such as synthesis and/or repair of Fe-S clusters in biosynthetic enzymes. The polypeptide is Probable Fe(2+)-trafficking protein (Klebsiella pneumoniae (strain 342)).